A 95-amino-acid polypeptide reads, in one-letter code: UPF0235 protein Adeh_1087 (95 aa).

Belongs to the UPF0235 family.

The sequence is that of UPF0235 protein Adeh_1087 from Anaeromyxobacter dehalogenans (strain 2CP-C).